The primary structure comprises 482 residues: MFS-type transporter traF (482 aa).

Polar residues predominate over residues 1–14; sequence MTSGTEQATLNTEE. A disordered region spans residues 1–22; sequence MTSGTEQATLNTEENGSDSDHL. Residues Asn15 and Asn45 are each glycosylated (N-linked (GlcNAc...) asparagine). 9 consecutive transmembrane segments (helical) span residues 52–72, 89–109, 125–145, 149–169, 176–196, 209–229, 275–295, 312–332, and 354–374; these read VFIT…SSVM, LSIL…LLFG, VFLF…ATIF, FLCG…LADL, GIAV…GPLV, WTQW…FVFC, PILA…YLCF, IGSL…VIII, and LVPM…FAWT. Asn376 carries an N-linked (GlcNAc...) asparagine glycan. 3 helical membrane passes run 379–399, 427–447, and 448–468; these read LPWA…LLIF, LLGA…GVPW, and AMSL…LFFI.

This sequence belongs to the major facilitator superfamily. CAR1 family.

Its subcellular location is the membrane. Functionally, MFS-type transporter; part of the tra gene cluster that produces terrestric acid. The clavatol biosynthesis cluster cla and the terrestric acid cluster tra are both involved in the production of peniphenones and penilactones. The sequence is that of MFS-type transporter traF from Penicillium crustosum (Blue mold fungus).